The following is a 311-amino-acid chain: Olfactory receptor 6C3 (311 aa).

The Extracellular portion of the chain corresponds to M1–I22. N-linked (GlcNAc...) asparagine glycosylation occurs at N2. The chain crosses the membrane as a helical span at residues V23–I43. Topologically, residues T44–H51 are cytoplasmic. Residues L52–T72 traverse the membrane as a helical segment. Over V73–A96 the chain is Extracellular. Residues C94 and C186 are joined by a disulfide bond. A helical transmembrane segment spans residues Q97–Y117. The Cytoplasmic segment spans residues D118 to K136. A helical transmembrane segment spans residues L137 to L157. The Extracellular portion of the chain corresponds to M158–V194. A helical membrane pass occupies residues I195–S214. At Y215–A234 the chain is on the cytoplasmic side. A helical transmembrane segment spans residues F235 to M255. The Extracellular portion of the chain corresponds to Y256–T268. The chain crosses the membrane as a helical span at residues K269 to L289. At R290–Q311 the chain is on the cytoplasmic side.

It belongs to the G-protein coupled receptor 1 family.

Its subcellular location is the cell membrane. Its function is as follows. Odorant receptor. In Homo sapiens (Human), this protein is Olfactory receptor 6C3 (OR6C3).